The following is a 1131-amino-acid chain: Topless-related protein 2 (1131 aa).

The LisH domain maps to 4 to 36 (LSRELVFLILQFLDEEKFKESVHKLEQESGFFF). The CTLH domain occupies 34–92 (FFFNIKYFEEKALAGEWDEVEKYLSGFTKVDDNRYSMKIFFEIRKQKYLEALDRNDRAK). A Phosphothreonine modification is found at Thr-214. 12 WD repeats span residues 345-385 (RQGS…KVVT), 407-446 (EPSI…LRQH), 451-493 (AHVG…FTFE), 495-535 (HEAP…SRVD), 585-624 (FRKK…LLTV), 629-668 (GGLP…RTLR), 763-802 (DSVS…QNPT), 829-867 (NPEG…VMTT), 870-910 (PPPP…VKTK), 913-952 (GHQK…KKKS), 959-999 (PGKA…CIHK), and 1005-1044 (ALSS…LRCR). The segment at 1099–1131 (VGVAAGSDKAGTENGRPSSSSAANNSSSDQIQR) is disordered. A compositionally biased stretch (low complexity) spans 1116–1131 (SSSSAANNSSSDQIQR).

As to quaternary structure, tetramer. Interacts with NINJA/AFPH2. Interacts with SMXL6, SMXL7 and SMXL8. Interacts with SPL (via EAR motif). Interacts with SPEAR3/TIE1.

Its subcellular location is the nucleus. Functionally, transcriptional corepressor. Negative regulator of jasmonate responses. This chain is Topless-related protein 2 (TPR2), found in Arabidopsis thaliana (Mouse-ear cress).